The chain runs to 492 residues: Aerolysin-4 (492 aa).

A signal peptide spans 1–23 (MKKLKITGLSLIISGLLMAQAQA). Intrachain disulfides connect Cys-42/Cys-98 and Cys-182/Cys-187. Positions 68–84 (WQISGLANGWVIMGPGY) are interaction with host N-linked glycan. The part of the transmembrane beta-barrel after proteolytic activation of the toxin and insertion into the host membrane stretch occupies residues 256–288 (YGLSEKVTTKNKFKWPLVGETELSIEIAANQSW). Residues 346-355 (RWGGNAWYTH) are interaction with glycans from host GPI-anchor. The propeptide occupies 446–492 (AAASHSSRARNLSAGQGLRLEIPLDAQELSGLGFNNVSLSVTPAANQ).

Belongs to the aerolysin family. In terms of assembly, homodimer in solution; homoheptamer in the host membrane. After binding to GPI-anchored proteins in target membranes and proteolytic removal of the C-terminal propeptide, the protein assembles into a heptameric pre-pore complex. A further conformation change leads to insertion into the host membrane. Post-translationally, proteolytic cleavage and subsequent release of the propeptide trigger a major conformation change, leading to the formation of a heptameric pre-pore that then inserts into the host membrane.

It is found in the secreted. The protein resides in the host cell membrane. Its function is as follows. Secreted, cytolytic toxin that forms pores in host membranes after proteolytic removal of a C-terminal propeptide, leading to destruction of the membrane permeability barrier and cell death. The pores are formed by transmembrane beta-strands and are approximately 3 nm in diameter. The chain is Aerolysin-4 (ahh4) from Aeromonas hydrophila.